A 481-amino-acid polypeptide reads, in one-letter code: Phosphoglycerate kinase 1, chloroplastic (481 aa).

The N-terminal 75 residues, 1 to 75, are a transit peptide targeting the chloroplast; that stretch reads MASAAASSAF…VRGKGSRGVV (75 aa). Serine 81 is subject to Phosphoserine. (2R)-3-phosphoglycerate-binding residues include alanine 99, aspartate 100, asparagine 102, arginine 116, threonine 138, histidine 139, glycine 141, arginine 142, arginine 197, histidine 229, and arginine 230. Position 275 (glycine 275) interacts with ADP. Glycine 275 is a binding site for CDP. AMP-binding residues include lysine 277 and lysine 281. Lysine 281 is a binding site for ATP. Glycine 299 contacts ADP. Glycine 299 contributes to the CDP binding site. Residues glycine 300 and glycine 372 each contribute to the AMP site. Glycine 300 and glycine 372 together coordinate ATP. Residues glycine 397 and phenylalanine 402 each coordinate CDP. Position 402 (phenylalanine 402) interacts with ADP. Glutamate 403 provides a ligand contact to AMP. 3 residues coordinate ATP: glutamate 403, aspartate 434, and serine 435. Aspartate 434 contacts Mg(2+).

Belongs to the phosphoglycerate kinase family. In terms of assembly, monomer. Binds to FTSZ2-1 and FTSZ2-2. Mg(2+) serves as cofactor.

The protein localises to the plastid. It localises to the chloroplast. The enzyme catalyses (2R)-3-phosphoglycerate + ATP = (2R)-3-phospho-glyceroyl phosphate + ADP. The protein operates within carbohydrate biosynthesis; Calvin cycle. Functionally, may trigger the phosphorylation of FTSZ2-1 and FTSZ2-2. The sequence is that of Phosphoglycerate kinase 1, chloroplastic from Arabidopsis thaliana (Mouse-ear cress).